We begin with the raw amino-acid sequence, 356 residues long: 5-formaminoimidazole-4-carboxamide-1-(beta)-D-ribofuranosyl 5'-monophosphate synthetase 1 (356 aa).

His27 and Ser94 together coordinate 5-amino-1-(5-phospho-beta-D-ribosyl)imidazole-4-carboxamide. The 233-residue stretch at 101–333 folds into the ATP-grasp domain; that stretch reads TENFAEMAVP…YADLIQEDLS (233 aa). Residues 145–196 and Glu226 contribute to the ATP site; that span reads PRDI…TRYY. Asn255 is a binding site for 5-amino-1-(5-phospho-beta-D-ribosyl)imidazole-4-carboxamide. The Mg(2+) site is built by Glu293 and Glu306.

It belongs to the phosphohexose mutase family. Requires Mg(2+) as cofactor. The cofactor is Mn(2+).

The catalysed reaction is 5-amino-1-(5-phospho-beta-D-ribosyl)imidazole-4-carboxamide + formate + ATP = 5-formamido-1-(5-phospho-D-ribosyl)imidazole-4-carboxamide + ADP + phosphate. The protein operates within purine metabolism; IMP biosynthesis via de novo pathway; 5-formamido-1-(5-phospho-D-ribosyl)imidazole-4-carboxamide from 5-amino-1-(5-phospho-D-ribosyl)imidazole-4-carboxamide (formate route): step 1/1. Functionally, catalyzes the ATP- and formate-dependent formylation of 5-aminoimidazole-4-carboxamide-1-beta-d-ribofuranosyl 5'-monophosphate (AICAR) to 5-formaminoimidazole-4-carboxamide-1-beta-d-ribofuranosyl 5'-monophosphate (FAICAR) in the absence of folates. The protein is 5-formaminoimidazole-4-carboxamide-1-(beta)-D-ribofuranosyl 5'-monophosphate synthetase 1 of Methanosarcina mazei (strain ATCC BAA-159 / DSM 3647 / Goe1 / Go1 / JCM 11833 / OCM 88) (Methanosarcina frisia).